Consider the following 435-residue polypeptide: Methylenetetrahydrofolate--tRNA-(uracil-5-)-methyltransferase TrmFO (435 aa).

10–15 is an FAD binding site; that stretch reads GAGLAG.

This sequence belongs to the MnmG family. TrmFO subfamily. As to quaternary structure, homodimer. It depends on FAD as a cofactor.

It is found in the cytoplasm. It catalyses the reaction uridine(54) in tRNA + (6R)-5,10-methylene-5,6,7,8-tetrahydrofolate + NADH + H(+) = 5-methyluridine(54) in tRNA + (6S)-5,6,7,8-tetrahydrofolate + NAD(+). It carries out the reaction uridine(54) in tRNA + (6R)-5,10-methylene-5,6,7,8-tetrahydrofolate + NADPH + H(+) = 5-methyluridine(54) in tRNA + (6S)-5,6,7,8-tetrahydrofolate + NADP(+). Functionally, catalyzes the folate-dependent formation of 5-methyl-uridine at position 54 (M-5-U54) in all tRNAs. The chain is Methylenetetrahydrofolate--tRNA-(uracil-5-)-methyltransferase TrmFO from Bacillus subtilis (strain 168).